Consider the following 413-residue polypeptide: Porin PorA (413 aa).

Residues 1 to 22 (MKKVVSSLLIILGAAMLIFAIA) form the signal peptide. The interval 265-288 (TKSAADSKDDKKKDGDKKDEKSPE) is disordered.

Belongs to the PorA family.

It localises to the secreted. It is found in the cell wall. Forms water-filled channels that favor the permeation of cations. The protein is Porin PorA of Corynebacterium resistens (strain DSM 45100 / JCM 12819 / GTC 2026 / SICGH 158).